Consider the following 1010-residue polypeptide: MSQLRLLPSRLGAQAARLLAAHDIPVFGWRSRSSRPPATLPSSKGGGGSSYMEEMYFAWLENPRSVHKSWDSFFRKASEEAFSGSAQPRPPSVVHESRSAVSSRTKTSKLVEDHLAVQSLIRAYQIRGHHVAQLDPLGILDADLDSFVPSDLITTIDKLAFYDLQEADLDKEFQLPTTTFIGGSENTLSLREIIRRLENTYCQHIGLEFMFINDVEQCQWIRQKFETPGVMQFSSEEKRTLLARLVRSMRFEDFLARKWSSEKRFGLEGCEVMIPALKTIIDKSSEMGIENVILGMPHRGRLNVLANVIRKDLEQIFCQFDPKLEAADEGSGDVKYHLGMYHERINRVTNRNITLSLVANPSHLEAVDPVVQGKTKAEQFYRGDAQGKKVMSILVHGDAAFAGQGVVYETFHLSDLPSYTTNGTVHVVVNNQIGFTTDPRMARSSPYPTDVARVVNAPIFHVNADDPEAVIYVCSVAAEWRNTFNKDVVVDLVCYRRRGHNEMDEPMFTQPLMYKQIHRQVPVLKKYADKLIAEGTVTLQEFEEEIAKYDRICEEAYGRSKDKKILHIKHWLDSPWPGFFNVDGEPKSMTCPATGIPEDMLTHIGSVASSVPLEDFKIHTGLSRILRGRADMIKNRTVDWALAEYMAFGSLLKEGIRVRLSGQDVERGTFSHRHHVLHDQEVDRRTCVPMNHLWPDQAPYTVCNSSLSEYGVLGFELGYAMASPNALVLWEAQFGDFHNTAQCIIDQFISTGQAKWVRHNGIVLLLPHGMEGMGPEHSSARPERFLQMSNDDSDAYPAFTKDFEVSQLYDCNWIVVNCSTPANYFHVLRRQILLPFRKPLIIFTPKSLLRHPEAKFSFDQMVSGTSFQRVIPEDGAAARAPEQVRRLIFCTGKVYYDLVKERSSQGLEEKVAITRLEQISPFPFDLIKQEAEKYPGAELAWCQEEHKNMGYYDYISPRFMTILRRARPIWYVGRDPAAAPATGNRNTHLVSLKKFLDTAFNLQAFEGKTF.

The N-terminal 73 residues, 1–73, are a transit peptide targeting the mitochondrion; sequence MSQLRLLPSR…RSVHKSWDSF (73 aa). Ca(2+)-binding residues include histidine 130, aspartate 143, and aspartate 145. 5 residues coordinate thiamine diphosphate: arginine 299, aspartate 398, asparagine 431, isoleucine 433, and glutamine 663. Aspartate 398, asparagine 431, and isoleucine 433 together coordinate Mg(2+).

Belongs to the alpha-ketoglutarate dehydrogenase family. In terms of assembly, the OGDHC complex comprises multiple copies of three catalytic enzyme components, the 2-oxoglutarate dehydrogenase (OGDH/E1), the dihydrolipoamide dehydrogenase (DLST/E2) and the dihydrolipoamide dehydrogenase (DLD/E3). OGDHL/E1-like isoenzyme may replace OGDH in the OGDHC complex in the brain. The presence of either ODGH/E1 or ODGHL/E1-like isoenzyme in the complex may depend on its tissular distribution. Thiamine diphosphate is required as a cofactor. Requires Mg(2+) as cofactor.

The protein resides in the mitochondrion matrix. It carries out the reaction N(6)-[(R)-lipoyl]-L-lysyl-[protein] + 2-oxoglutarate + H(+) = N(6)-[(R)-S(8)-succinyldihydrolipoyl]-L-lysyl-[protein] + CO2. Its function is as follows. 2-oxoglutarate dehydrogenase (E1-like) component of the 2-oxoglutarate dehydrogenase multienzyme complex (OGDHC) which mediates the decarboxylation of alpha-ketoglutarate in the tricarboxylic acid cycle. The OGDHC complex catalyzes the overall conversion of 2-oxoglutarate to succinyl-CoA and CO(2) while reducing NAD(+) to NADH. The OGDHC complex is mainly active in the mitochondrion. Involved in the inhibition of cell proliferation and in apoptosis. This is 2-oxoglutarate dehydrogenase-like, mitochondrial (OGDHL) from Pongo abelii (Sumatran orangutan).